Reading from the N-terminus, the 251-residue chain is Ubiquinone/menaquinone biosynthesis C-methyltransferase UbiE (251 aa).

S-adenosyl-L-methionine contacts are provided by residues T74, D95, N123–A124, and S140.

Belongs to the class I-like SAM-binding methyltransferase superfamily. MenG/UbiE family.

The enzyme catalyses a 2-demethylmenaquinol + S-adenosyl-L-methionine = a menaquinol + S-adenosyl-L-homocysteine + H(+). It catalyses the reaction a 2-methoxy-6-(all-trans-polyprenyl)benzene-1,4-diol + S-adenosyl-L-methionine = a 5-methoxy-2-methyl-3-(all-trans-polyprenyl)benzene-1,4-diol + S-adenosyl-L-homocysteine + H(+). It participates in quinol/quinone metabolism; menaquinone biosynthesis; menaquinol from 1,4-dihydroxy-2-naphthoate: step 2/2. Its pathway is cofactor biosynthesis; ubiquinone biosynthesis. Functionally, methyltransferase required for the conversion of demethylmenaquinol (DMKH2) to menaquinol (MKH2) and the conversion of 2-polyprenyl-6-methoxy-1,4-benzoquinol (DDMQH2) to 2-polyprenyl-3-methyl-6-methoxy-1,4-benzoquinol (DMQH2). The protein is Ubiquinone/menaquinone biosynthesis C-methyltransferase UbiE of Cronobacter sakazakii (strain ATCC BAA-894) (Enterobacter sakazakii).